A 315-amino-acid chain; its full sequence is Beta-ketoacyl-[acyl-carrier-protein] synthase III (315 aa).

Active-site residues include Cys-115 and His-244. An ACP-binding region spans residues 245-249; the sequence is QANAR. Asn-274 is an active-site residue.

The protein belongs to the thiolase-like superfamily. FabH family. Homodimer.

It localises to the cytoplasm. It catalyses the reaction malonyl-[ACP] + acetyl-CoA + H(+) = 3-oxobutanoyl-[ACP] + CO2 + CoA. It participates in lipid metabolism; fatty acid biosynthesis. Catalyzes the condensation reaction of fatty acid synthesis by the addition to an acyl acceptor of two carbons from malonyl-ACP. Catalyzes the first condensation reaction which initiates fatty acid synthesis and may therefore play a role in governing the total rate of fatty acid production. Possesses both acetoacetyl-ACP synthase and acetyl transacylase activities. Its substrate specificity determines the biosynthesis of branched-chain and/or straight-chain of fatty acids. The protein is Beta-ketoacyl-[acyl-carrier-protein] synthase III of Rubrobacter xylanophilus (strain DSM 9941 / JCM 11954 / NBRC 16129 / PRD-1).